The sequence spans 166 residues: Large ribosomal subunit protein uL10 (166 aa).

The protein belongs to the universal ribosomal protein uL10 family. Part of the ribosomal stalk of the 50S ribosomal subunit. The N-terminus interacts with L11 and the large rRNA to form the base of the stalk. The C-terminus forms an elongated spine to which L12 dimers bind in a sequential fashion forming a multimeric L10(L12)X complex.

Functionally, forms part of the ribosomal stalk, playing a central role in the interaction of the ribosome with GTP-bound translation factors. The sequence is that of Large ribosomal subunit protein uL10 from Ectopseudomonas mendocina (strain ymp) (Pseudomonas mendocina).